The primary structure comprises 888 residues: 3-hydroxy-3-methylglutaryl-coenzyme A reductase (888 aa).

Over 1 to 9 (MLSRLFRMH) the chain is Cytoplasmic. The chain crosses the membrane as a helical span at residues 10–39 (GLFVASHPWEVIVGTVTLTICMMSMNMFTG). Residues 40 to 56 (NDKICGWNYECPKFEED) are Lumenal-facing. A helical transmembrane segment spans residues 57–78 (VLSSDIIILTITRCIAILYIYF). The 158-residue stretch at 61-218 (DIIILTITRC…MTFFPACVSL (158 aa)) folds into the SSD domain. The INSIG-binding motif signature appears at 75-78 (YIYF). Residues 79 to 89 (QFQNLRQLGSK) lie on the Cytoplasmic side of the membrane. Lys89 is covalently cross-linked (Glycyl lysine isopeptide (Lys-Gly) (interchain with G-Cter in ubiquitin)). A helical membrane pass occupies residues 90-114 (YILGIAGLFTIFSSFVFSTVVIHFL). Topologically, residues 115–123 (DKELTGLNE) are lumenal. The chain crosses the membrane as a helical span at residues 124–149 (ALPFFLLLIDLSRASALAKFALSSNS). The Cytoplasmic segment spans residues 150 to 159 (QDEVRENIAR). Residues 160–187 (GMAILGPTFTLDALVECLVIGVGTMSGV) traverse the membrane as a helical segment. Residues 188–191 (RQLE) are Lumenal-facing. A helical transmembrane segment spans residues 192-220 (IMCCFGCMSVLANYFVFMTFFPACVSLVL). The Cytoplasmic portion of the chain corresponds to 221–248 (ELSRESREGRPIWQLSHFARVLEEEENK). Lys248 is covalently cross-linked (Glycyl lysine isopeptide (Lys-Gly) (interchain with G-Cter in ubiquitin)). Residues 249–275 (PNPVTQRVKMIMSLGLVLVHAHSRWIA) form a helical membrane-spanning segment. Residues 276 to 314 (DPSPQNSTADNSKVSLGLDENVSKRIEPSVSLWQFYLSK) lie on the Lumenal side of the membrane. 2 N-linked (GlcNAc...) asparagine glycosylation sites follow: Asn281 and Asn296. A helical transmembrane segment spans residues 315 to 339 (MISMDIEQVITLSLALLLAVKYIFF). Topologically, residues 340 to 888 (EQAETESTLS…LEGACTKKAA (549 aa)) are cytoplasmic. Catalysis depends on charge relay system residues Glu559, Lys691, and Asp767. His866 functions as the Proton donor in the catalytic mechanism. Ser872 is modified (phosphoserine; by AMPK).

This sequence belongs to the HMG-CoA reductase family. Homotetramer. Homodimer. Interacts (via its SSD) with INSIG1; the interaction, accelerated by sterols, leads to the recruitment of HMGCR to AMFR/gp78 for its ubiquitination by the sterol-mediated ERAD pathway. Interacts with UBIAD1. Undergoes sterol-mediated ubiquitination and ER-associated degradation (ERAD). Accumulation of sterols in the endoplasmic reticulum (ER) membrane, triggers binding of the reductase to the ER membrane protein INSIG1 or INSIG2. The INSIG1 binding leads to the recruitment of the ubiquitin ligase, AMFR/gp78, RNF139 or RNF145, initiating ubiquitination of the reductase. The ubiquitinated reductase is then extracted from the ER membrane and delivered to cytosolic 26S proteosomes by a mechanism probably mediated by the ATPase Valosin-containing protein VCP/p97. The INSIG2-binding leads to the recruitment of the ubiquitin ligase RNF139, initiating ubiquitination of the reductase. Lys-248 is the main site of ubiquitination. Ubiquitination is enhanced by the presence of a geranylgeranylated protein. In terms of processing, N-glycosylated. Deglycosylated by NGLY1 on release from the endoplasmic reticulum (ER) in a sterol-mediated manner. Post-translationally, phosphorylated. Phosphorylation at Ser-872 reduces the catalytic activity.

The protein resides in the endoplasmic reticulum membrane. It localises to the peroxisome membrane. The catalysed reaction is (R)-mevalonate + 2 NADP(+) + CoA = (3S)-3-hydroxy-3-methylglutaryl-CoA + 2 NADPH + 2 H(+). It functions in the pathway metabolic intermediate biosynthesis; (R)-mevalonate biosynthesis; (R)-mevalonate from acetyl-CoA: step 3/3. Regulated by a negative feedback mechanism through sterols and non-sterol metabolites derived from mevalonate. Phosphorylation at Ser-872 down-regulates the catalytic activity. Catalyzes the conversion of (3S)-hydroxy-3-methylglutaryl-CoA (HMG-CoA) to mevalonic acid, the rate-limiting step in the synthesis of cholesterol and other isoprenoids, thus plays a critical role in cellular cholesterol homeostasis. The polypeptide is 3-hydroxy-3-methylglutaryl-coenzyme A reductase (HMGCR) (Oryctolagus cuniculus (Rabbit)).